The following is a 39-amino-acid chain: Bacteriocin lactococcin-G subunit alpha (39 aa).

Bacteriocin activity requires interaction of alpha and beta peptides in a molar ratio of 7:1 or 8:1 respectively.

In terms of biological role, kills Lactococci. This Lactococcus lactis subsp. lactis (Streptococcus lactis) protein is Bacteriocin lactococcin-G subunit alpha.